The primary structure comprises 292 residues: 4-hydroxy-tetrahydrodipicolinate synthase (292 aa).

Pyruvate is bound at residue T45. The active-site Proton donor/acceptor is Y133. The active-site Schiff-base intermediate with substrate is K162. I204 contributes to the pyruvate binding site.

This sequence belongs to the DapA family. In terms of assembly, homotetramer; dimer of dimers.

Its subcellular location is the cytoplasm. It catalyses the reaction L-aspartate 4-semialdehyde + pyruvate = (2S,4S)-4-hydroxy-2,3,4,5-tetrahydrodipicolinate + H2O + H(+). Its pathway is amino-acid biosynthesis; L-lysine biosynthesis via DAP pathway; (S)-tetrahydrodipicolinate from L-aspartate: step 3/4. Catalyzes the condensation of (S)-aspartate-beta-semialdehyde [(S)-ASA] and pyruvate to 4-hydroxy-tetrahydrodipicolinate (HTPA). The polypeptide is 4-hydroxy-tetrahydrodipicolinate synthase (Nitratidesulfovibrio vulgaris (strain ATCC 29579 / DSM 644 / CCUG 34227 / NCIMB 8303 / VKM B-1760 / Hildenborough) (Desulfovibrio vulgaris)).